The primary structure comprises 252 residues: Triosephosphate isomerase (252 aa).

10-12 contributes to the substrate binding site; the sequence is NWK. Residue histidine 96 is the Electrophile of the active site. Catalysis depends on glutamate 168, which acts as the Proton acceptor. Substrate-binding positions include glycine 174, serine 214, and 235–236; that span reads GG.

Belongs to the triosephosphate isomerase family. In terms of assembly, homodimer.

It is found in the cytoplasm. The enzyme catalyses D-glyceraldehyde 3-phosphate = dihydroxyacetone phosphate. It functions in the pathway carbohydrate biosynthesis; gluconeogenesis. The protein operates within carbohydrate degradation; glycolysis; D-glyceraldehyde 3-phosphate from glycerone phosphate: step 1/1. In terms of biological role, involved in the gluconeogenesis. Catalyzes stereospecifically the conversion of dihydroxyacetone phosphate (DHAP) to D-glyceraldehyde-3-phosphate (G3P). This is Triosephosphate isomerase from Streptococcus pyogenes serotype M2 (strain MGAS10270).